We begin with the raw amino-acid sequence, 271 residues long: Non-homologous end joining protein Ku (271 aa).

The region spanning 12-194 (KLSLVTCPVV…DQKPVPELLS (183 aa)) is the Ku domain. The interval 225–249 (EAKKTPPAKKTKAEEKTGKGSAESN) is disordered.

It belongs to the prokaryotic Ku family. In terms of assembly, homodimer. Interacts with LigD.

Its function is as follows. With LigD forms a non-homologous end joining (NHEJ) DNA repair enzyme, which repairs dsDNA breaks with reduced fidelity. Binds linear dsDNA with 5'- and 3'- overhangs but not closed circular dsDNA nor ssDNA. Recruits and stimulates the ligase activity of LigD. This Methylocella silvestris (strain DSM 15510 / CIP 108128 / LMG 27833 / NCIMB 13906 / BL2) protein is Non-homologous end joining protein Ku.